Here is a 266-residue protein sequence, read N- to C-terminus: Putative pyruvate, phosphate dikinase regulatory protein (266 aa).

147-154 (GLSRTSKT) is a binding site for ADP.

Belongs to the pyruvate, phosphate/water dikinase regulatory protein family. PDRP subfamily.

It catalyses the reaction N(tele)-phospho-L-histidyl/L-threonyl-[pyruvate, phosphate dikinase] + ADP = N(tele)-phospho-L-histidyl/O-phospho-L-threonyl-[pyruvate, phosphate dikinase] + AMP + H(+). It carries out the reaction N(tele)-phospho-L-histidyl/O-phospho-L-threonyl-[pyruvate, phosphate dikinase] + phosphate + H(+) = N(tele)-phospho-L-histidyl/L-threonyl-[pyruvate, phosphate dikinase] + diphosphate. Its function is as follows. Bifunctional serine/threonine kinase and phosphorylase involved in the regulation of the pyruvate, phosphate dikinase (PPDK) by catalyzing its phosphorylation/dephosphorylation. This chain is Putative pyruvate, phosphate dikinase regulatory protein, found in Clostridium perfringens (strain SM101 / Type A).